Consider the following 423-residue polypeptide: Gamma-glutamyl phosphate reductase (423 aa).

Belongs to the gamma-glutamyl phosphate reductase family.

The protein localises to the cytoplasm. It carries out the reaction L-glutamate 5-semialdehyde + phosphate + NADP(+) = L-glutamyl 5-phosphate + NADPH + H(+). Its pathway is amino-acid biosynthesis; L-proline biosynthesis; L-glutamate 5-semialdehyde from L-glutamate: step 2/2. In terms of biological role, catalyzes the NADPH-dependent reduction of L-glutamate 5-phosphate into L-glutamate 5-semialdehyde and phosphate. The product spontaneously undergoes cyclization to form 1-pyrroline-5-carboxylate. The sequence is that of Gamma-glutamyl phosphate reductase from Burkholderia vietnamiensis (strain G4 / LMG 22486) (Burkholderia cepacia (strain R1808)).